The following is a 376-amino-acid chain: Alpha-2,8-sialyltransferase 8E (376 aa).

A helical membrane pass occupies residues 17-37 (TLLFIFICAFALVTLLQQILY). An N-linked (GlcNAc...) asparagine glycan is attached at N56. Cystine bridges form between C164/C313 and C178/C373. Substrate-binding positions include N192 and 214-216 (NPS). N241 is a glycosylation site (N-linked (GlcNAc...) asparagine). 300–302 (STG) contributes to the substrate binding site. Catalysis depends on H348, which acts as the Proton donor/acceptor.

This sequence belongs to the glycosyltransferase 29 family. In terms of tissue distribution, expressed in liver.

Its subcellular location is the golgi apparatus membrane. It catalyses the reaction a ganglioside GT1b (d18:1(4E)) + CMP-N-acetyl-beta-neuraminate = a ganglioside GQ1b (d18:1(4E)) + CMP + H(+). The catalysed reaction is a ganglioside GQ1c (d18:1(4E)) + CMP-N-acetyl-beta-neuraminate = a ganglioside GP1c (d18:1(4E)) + CMP + H(+). The enzyme catalyses a ganglioside GD3 (d18:1(4E)) + CMP-N-acetyl-beta-neuraminate = a ganglioside GT3 (d18:1(4E)) + CMP + H(+). It carries out the reaction a ganglioside GD1a (d18:1(4E)) + CMP-N-acetyl-beta-neuraminate = a ganglioside GT1a (d18:1(4E)) + CMP + H(+). It catalyses the reaction a ganglioside GM1b (d18:1(4E)) + CMP-N-acetyl-beta-neuraminate = a ganglioside GD1c (d18:1(4E)) + CMP + H(+). It participates in protein modification; protein glycosylation. Involved in the synthesis of gangliosides GD1c, GT1a, GQ1b, GP1c and GT3 from GD1a, GT1b, GM1b and GD3 respectively. In Rattus norvegicus (Rat), this protein is Alpha-2,8-sialyltransferase 8E.